A 1775-amino-acid polypeptide reads, in one-letter code: Internalin I (1775 aa).

A signal peptide spans Met1 to Ala28. Over residues Asp36 to Ala50 the composition is skewed to low complexity. Residues Asp36 to Asp97 form a disordered region. Over residues Asp58 to Glu85 the composition is skewed to basic and acidic residues. LRR repeat units lie at residues Ala152–Gln176, Asn180–Val201, Asn202–Val224, Asn225–Pro247, Val248–Gly269, Glu274–Pro295, Lys296–Thr318, Lys319–Ser341, Glu342–Pro364, Asn365–Pro386, Lys387–Pro409, Gln410–Pro431, Lys432–Pro453, Arg454–Pro475, Leu476–Pro497, Ser498–Pro519, Ser520–Pro541, Asn542–Pro563, Lys564–Pro585, Ser586–Pro607, Glu608–Pro629, Lys630–Asp650, Lys654–Ser675, Asn682–Ser704, Arg705–Thr726, Thr727–Asp748, and Asn749–Val770. An LRRCT domain is found at Thr782 to Glu869. 3 consecutive MucBP domains span residues Asp1507–Val1566, Ala1572–Ile1631, and Ser1641–Val1702. The segment at Ser1713–Asn1737 is disordered. The LPXTG sorting signal motif lies at Leu1740–Gly1744. Thr1743 carries the post-translational modification Pentaglycyl murein peptidoglycan amidated threonine. Positions Gly1744–Gln1775 are cleaved as a propeptide — removed by sortase.

It belongs to the internalin family.

Its subcellular location is the secreted. The protein resides in the cell wall. In terms of biological role, a role in virulence could not be demonstrated. This Listeria monocytogenes serotype 4b (strain F2365) protein is Internalin I (inlI).